An 809-amino-acid chain; its full sequence is ATP-dependent zinc metalloprotease FTSH 3, mitochondrial (809 aa).

A mitochondrion-targeting transit peptide spans 1 to 83 (MTMIFFSKLN…FANPRLRRFF (83 aa)). Over residues 93-121 (YENYFPKDKQEPKSDQKSEHKEGSEKNEN) the composition is skewed to basic and acidic residues. Residues 93-122 (YENYFPKDKQEPKSDQKSEHKEGSEKNENE) are disordered. The helical transmembrane segment at 132-152 (FQNLLIPLLALAVFFSTFSFG) threads the bilayer. 362–369 (GPPGTGKT) lines the ATP pocket. H586 is a binding site for Zn(2+). Residue E587 is part of the active site. The Zn(2+) site is built by H590 and D662. The tract at residues 776-809 (GFEETEKDSAATPTVEPVVDDGAPPPFEPQVVPT) is disordered.

The protein in the N-terminal section; belongs to the AAA ATPase family. It in the C-terminal section; belongs to the peptidase M41 family. Requires Zn(2+) as cofactor.

The protein resides in the mitochondrion inner membrane. Probable ATP-dependent zinc metallopeptidase. Involved in the assembly and/or stability of the complexes I and V of the mitochondrial oxidative phosphorylation system. The sequence is that of ATP-dependent zinc metalloprotease FTSH 3, mitochondrial (FTSH3) from Arabidopsis thaliana (Mouse-ear cress).